Here is a 490-residue protein sequence, read N- to C-terminus: Cytochrome P450 2C26 (490 aa).

Residue C435 participates in heme binding.

This sequence belongs to the cytochrome P450 family. Requires heme as cofactor.

It localises to the endoplasmic reticulum membrane. The protein localises to the microsome membrane. The enzyme catalyses an organic molecule + reduced [NADPH--hemoprotein reductase] + O2 = an alcohol + oxidized [NADPH--hemoprotein reductase] + H2O + H(+). Its function is as follows. Catalyzes the hydroxylation of tolbutamide and the N-demethylation of aminopyrine and benzphetamine. The polypeptide is Cytochrome P450 2C26 (CYP2C26) (Mesocricetus auratus (Golden hamster)).